The primary structure comprises 156 residues: Small ribosomal subunit protein bS16 (156 aa).

Residues 114 to 156 form a disordered region; sequence ENEPVAEAITPKKKKAAKADEAKAEDTAADAEAPAADAEAADK. The segment covering 130–139 has biased composition (basic and acidic residues); it reads AKADEAKAED. The segment covering 143–156 has biased composition (low complexity); it reads DAEAPAADAEAADK.

This sequence belongs to the bacterial ribosomal protein bS16 family.

This is Small ribosomal subunit protein bS16 from Rhodococcus erythropolis (strain PR4 / NBRC 100887).